We begin with the raw amino-acid sequence, 392 residues long: Tryptophan synthase beta chain (392 aa).

The residue at position 86 (Lys86) is an N6-(pyridoxal phosphate)lysine.

The protein belongs to the TrpB family. In terms of assembly, tetramer of two alpha and two beta chains. It depends on pyridoxal 5'-phosphate as a cofactor.

The enzyme catalyses (1S,2R)-1-C-(indol-3-yl)glycerol 3-phosphate + L-serine = D-glyceraldehyde 3-phosphate + L-tryptophan + H2O. It participates in amino-acid biosynthesis; L-tryptophan biosynthesis; L-tryptophan from chorismate: step 5/5. The beta subunit is responsible for the synthesis of L-tryptophan from indole and L-serine. This is Tryptophan synthase beta chain (trpB) from Buchnera aphidicola subsp. Schlechtendalia chinensis.